Reading from the N-terminus, the 110-residue chain is Iron-sulfur cluster assembly protein CyaY (110 aa).

This sequence belongs to the frataxin family.

Functionally, involved in iron-sulfur (Fe-S) cluster assembly. May act as a regulator of Fe-S biogenesis. The polypeptide is Iron-sulfur cluster assembly protein CyaY (Variovorax paradoxus (strain S110)).